Consider the following 85-residue polypeptide: Large ribosomal subunit protein bL27 (85 aa).

The segment covering 1-10 (MAQKKGGGST) has biased composition (gly residues). The tract at residues 1 to 20 (MAQKKGGGSTRNGRDSKPKM) is disordered.

It belongs to the bacterial ribosomal protein bL27 family.

This Delftia acidovorans (strain DSM 14801 / SPH-1) protein is Large ribosomal subunit protein bL27.